Consider the following 178-residue polypeptide: Large ribosomal subunit protein bL25 (178 aa).

The protein belongs to the bacterial ribosomal protein bL25 family. CTC subfamily. As to quaternary structure, part of the 50S ribosomal subunit; part of the 5S rRNA/L5/L18/L25 subcomplex. Contacts the 5S rRNA. Binds to the 5S rRNA independently of L5 and L18.

This is one of the proteins that binds to the 5S RNA in the ribosome where it forms part of the central protuberance. The protein is Large ribosomal subunit protein bL25 of Campylobacter jejuni subsp. jejuni serotype O:23/36 (strain 81-176).